The primary structure comprises 1507 residues: Paired amphipathic helix protein sin-3 (1507 aa).

5 disordered regions span residues 1–26 (MYNP…TNNA), 228–286 (PLAL…PPRV), 397–450 (ELGS…MMEE), 543–569 (VDDV…DSSK), and 1349–1434 (IPRE…MDHL). Over residues 16–26 (DQSQQQPTNNA) the composition is skewed to polar residues. Residues 270–279 (RQNRPGRRKK) show a composition bias toward basic residues. In terms of domain architecture, PAH spans 282–352 (GPPRVDEALA…LGFNTFLPTG (71 aa)). Over residues 427 to 438 (DGIDDEDDEESG) the composition is skewed to acidic residues. Basic and acidic residues-rich tracts occupy residues 439–450 (IEDKNNEEMMEE) and 555–568 (EIKK…KDSS). 3 stretches are compositionally biased toward acidic residues: residues 1354–1365 (KDDDDDDDEEGN), 1373–1382 (NVKDEDDGGD), and 1389–1421 (PDDD…DEPE).

Component of the SIN3S complex, which contains at least sin-3, hda-1, athp-1 and mrg-1. Interacts with ztf-11; the interaction is weak. Interacts with cfp-1. In terms of tissue distribution, expressed in all ray structural cells including ray 6, 7, 8 and 9 of the male tail. Also expressed in the inner labial neurons, socket cells, the cephalic neurons in the head and the ventral nerve cord.

Its subcellular location is the nucleus. Its function is as follows. Probable transcriptional repressor required for the deposition of dimethylated 'Lys-9' of histone H3 (H3K9me2) on asynapsed chromosome pairs (both autosomes and sex chromosomes) during meiosis, but this does not seem to solely affect the transcriptional status. Plays a role in ray fusion and patterning in the male tail, and this may be through activity of the histone deacetylase complex (HDAC). This is Paired amphipathic helix protein sin-3 from Caenorhabditis elegans.